A 315-amino-acid polypeptide reads, in one-letter code: MAVVTIRQLLDCGVHFGHPKTRWNPKMKRFIFTERSGIYIIDLQQSLALIDKAYDFVKETVAHGGTILFVGTKKQAQESIAEQAQRVGQPYVNQRWLGGLLTNFQTVHKRLNRLKELDLVDFDDTTRGFTKKELLIQRRERDKLEKSLGGIRNLTKTPSAMWVVDTKKEHLAIDEARKLGIPVIGILDTNCDPDEVQYPIPGNDDAIRSVALLTRIIADAAAEGLIQRHQKPDAEGSAPAEPLADWERELLEQGDAAKAELPVEENDVDAEVSAKNEAKSEDEVAAPVHAPESDDATEAKIEAEATESEKAPVSE.

A disordered region spans residues 250-315 (LLEQGDAAKA…TESEKAPVSE (66 aa)). 2 stretches are compositionally biased toward basic and acidic residues: residues 272 to 282 (VSAKNEAKSED) and 297 to 315 (TEAK…PVSE).

It belongs to the universal ribosomal protein uS2 family.

This chain is Small ribosomal subunit protein uS2, found in Clavibacter michiganensis subsp. michiganensis (strain NCPPB 382).